Here is a 617-residue protein sequence, read N- to C-terminus: Neurosecretory protein VGF (617 aa).

The N-terminal stretch at 1 to 23 is a signal peptide; that stretch reads MKTFTLPASVLFCFLLLIRGLGA. Disordered regions lie at residues 29-75, 94-113, 121-157, and 169-192; these read SDVY…GELF, PASP…EEAA, VRSQ…DRSE, and LRDF…ETRT. The span at 48 to 64 shows a compositional bias: basic and acidic residues; that stretch reads AVSRPKDDSVPEVRAAR. The segment covering 148 to 157 has biased composition (acidic residues); it reads NDPEADDRSE. The residue at position 180 (Gln-180) is a Pyrrolidone carboxylic acid. Over residues 182 to 192 the composition is skewed to low complexity; the sequence is ETAAAETETRT. The residue at position 313 (Gln-313) is a Pyrrolidone carboxylic acid. Positions 348-603 are disordered; it reads DLGGRGLQET…AEERRLQEQE (256 aa). The span at 378 to 397 shows a compositional bias: acidic residues; that stretch reads EDEVGEEDEEAAEAEAEAEE. Basic and acidic residues predominate over residues 418–436; that stretch reads AEDKRSQEEAPGHRRKDAE. At Ser-423 the chain carries Phosphoserine. Residues 437–452 show a composition bias toward acidic residues; it reads GTEEGGEEDDDDEEMD. Residues 491-501 show a composition bias toward pro residues; the sequence is PPEPVPPPRAA. Basic and acidic residues predominate over residues 577 to 601; the sequence is HHPDLEAQARRAQEEADAEERRLQE.

As to quaternary structure, interacts with HSPA8 on cell membrane. Interacts with C3AR1. Interacts with C1QBP. Post-translationally, multiple peptides are derived from VGF, with activities in synaptic plasticity, antidepression, penile erection, autonomic activation, and increases in energy expenditure. In terms of tissue distribution, central and peripheral nervous systems, synthesized exclusively in neuronal and neuroendocrine cells. VGF and several of the derived peptides are present in the brain.

It localises to the secreted. It is found in the cytoplasmic vesicle. The protein resides in the secretory vesicle. Functionally, secreted polyprotein that is packaged and proteolytically processed by prohormone convertases PCSK1 and PCSK2 in a cell-type-specific manner. VGF and peptides derived from its processing play many roles in neurogenesis and neuroplasticity associated with learning, memory, depression and chronic pain. Its function is as follows. Plays a role in the control of body fluid homeostasis by regulating vasopressin release. Suppresses presynaptic glutamatergic neurons connected to vasopressin neurons. Plays a role in the control of body fluid homeostasis by regulating vasopressin release. Activates GABAergic interneurons which are inhibitory neurons of the nervous system and thereby suppresses presynaptic glutamatergic neurons. Also stimulates feeding behavior in an orexin-dependent manner in the hypothalamus. Functions as a positive regulator for the activation of orexin neurons resulting in elevated gastric acid secretion and gastric emptying. In terms of biological role, secreted multifunctional neuropeptide that binds to different cell receptors and thereby plays multiple physiological roles including modulation of energy expenditure, pain, response to stress, gastric regulation, glucose homeostasis as well as lipolysis. Activates the G-protein-coupled receptor C3AR1 via a folding-upon-binding mechanism leading to enhanced lipolysis in adipocytes. Interacts with C1QBP receptor in macrophages and microglia causing increased levels of intracellular calcium and hypersensitivity. Functionally, plays a role in the regulation of memory formation and depression-related behaviors potentially by influencing synaptic plasticity and neurogenesis. Induces acute and transient activation of the NTRK2/TRKB receptor and subsequent CREB phosphorylation. Also induces insulin secretion in insulinoma cells by increasing intracellular calcium mobilization. This chain is Neurosecretory protein VGF (Vgf), found in Rattus norvegicus (Rat).